Here is a 215-residue protein sequence, read N- to C-terminus: Small ribosomal subunit protein eS1 (215 aa).

The protein belongs to the eukaryotic ribosomal protein eS1 family.

This chain is Small ribosomal subunit protein eS1, found in Halorubrum lacusprofundi (strain ATCC 49239 / DSM 5036 / JCM 8891 / ACAM 34).